Here is a 448-residue protein sequence, read N- to C-terminus: Phosphoglucosamine mutase (448 aa).

Ser102 serves as the catalytic Phosphoserine intermediate. Residues Ser102, Asp243, Asp245, and Asp247 each coordinate Mg(2+). Ser102 bears the Phosphoserine mark.

It belongs to the phosphohexose mutase family. It depends on Mg(2+) as a cofactor. Post-translationally, activated by phosphorylation.

The enzyme catalyses alpha-D-glucosamine 1-phosphate = D-glucosamine 6-phosphate. Its function is as follows. Catalyzes the conversion of glucosamine-6-phosphate to glucosamine-1-phosphate. In Mycobacterium bovis (strain ATCC BAA-935 / AF2122/97), this protein is Phosphoglucosamine mutase.